A 133-amino-acid polypeptide reads, in one-letter code: uncharacterized protein (133 aa).

A disordered region spans residues 107–133 (TSHHRAAGLQSQHAPGSGRVRITGGKV).

This is an uncharacterized protein from Homo sapiens (Human).